The primary structure comprises 1193 residues: Sperm-associated antigen 5 (1193 aa).

The disordered stretch occupies residues 1–48; it reads MWRVKKLSLSLSPSPQTGKPSMRTPLRELTLQPGALTNSGKRSPACSS. A phosphoserine mark is found at Ser12, Ser14, Ser43, Ser62, and Ser66. Residues 35–48 are compositionally biased toward polar residues; the sequence is ALTNSGKRSPACSS. A disordered region spans residues 96 to 117; that stretch reads ESDEQPLDPIPQISSTPKTSEE. Residue Thr111 is modified to Phosphothreonine; by GSK3-beta. Ser135, Ser159, and Ser334 each carry phosphoserine. At Thr336 the chain carries Phosphothreonine. Ser341, Ser353, and Ser362 each carry phosphoserine. Residues 390–405 show a composition bias toward polar residues; sequence PSAPQEKSTNTSQTGL. Positions 390–416 are disordered; it reads PSAPQEKSTNTSQTGLVGTKHSTSETE. Positions 482 to 850 are interaction with KNSTRN; that stretch reads NKLQHLKESH…LKDTVENLTA (369 aa). Coiled-coil stretches lie at residues 545–608 and 759–868; these read CCFD…SMRE and QLTQ…EKTR. Thr937 bears the Phosphothreonine; by GSK3-beta mark. Ser974 bears the Phosphoserine; by GSK3-beta mark. Thr978 bears the Phosphothreonine; by GSK3-beta mark. A coiled-coil region spans residues 979–1174; the sequence is ELQSLCSLLQ…VQHIYKTLLS (196 aa).

Homodimer, with a globular head domain and a long stalk. Homooligomer; the globular head domains associate, resulting in aster-like structures. Binds to microtubules in the mitotic spindle. Interacts with DCLRE1B/Apollo. Part of an astrin (SPAG5)-kinastrin (SKAP) complex containing KNSTRN, SPAG5, PLK1, DYNLL1 and SGO2. Interacts with KNSTRN. Interacts with RPTOR; this interaction competes with RPTOR binding to MTOR, resulting in decreased mTORC1 formation. Interacts with G3BP1. The complex formed with G3BP1 AND RPTOR is increased by oxidative stress. Interacts with OSBPL8, PCM1 and CDK5RAP2. Interacts (via C-terminus) with NUMA1 (via C-terminus); this interaction promotes the recruitment of SPAG5 to the microtubules at spindle poles in a dynein-dynactin-dependent manner. Interacts with DYNLL1. In terms of processing, phosphorylated by AURKA. In terms of tissue distribution, highly expressed in testis. Detected at low levels in placenta, liver, pancreas, thymus and colon.

The protein resides in the cytoplasm. It localises to the cytoskeleton. The protein localises to the spindle. It is found in the spindle pole. Its subcellular location is the chromosome. The protein resides in the centromere. It localises to the kinetochore. The protein localises to the midbody. It is found in the microtubule organizing center. Its subcellular location is the centrosome. The protein resides in the cytoplasmic granule. It localises to the centriolar satellite. Essential component of the mitotic spindle required for normal chromosome segregation and progression into anaphase. Required for chromosome alignment, normal timing of sister chromatid segregation, and maintenance of spindle pole architecture. In complex with SKAP, promotes stable microtubule-kinetochore attachments. May contribute to the regulation of separase activity. May regulate AURKA localization to mitotic spindle, but not to centrosomes and CCNB1 localization to both mitotic spindle and centrosomes. Involved in centriole duplication. Required for CDK5RAP2, CEP152, WDR62 and CEP63 centrosomal localization and promotes the centrosomal localization of CDK2. In non-mitotic cells, upon stress induction, inhibits mammalian target of rapamycin complex 1 (mTORC1) association and recruits the mTORC1 component RPTOR to stress granules (SGs), thereby preventing mTORC1 hyperactivation-induced apoptosis. May enhance GSK3B-mediated phosphorylation of other substrates, such as MAPT/TAU. The protein is Sperm-associated antigen 5 (SPAG5) of Homo sapiens (Human).